We begin with the raw amino-acid sequence, 67 residues long: Medusin-S1 (67 aa).

A signal peptide spans 1–22 (MSFLKKSLFLVLFLGFVSLSIC). A propeptide spanning residues 23 to 48 (EEEKRETEEKENEQEDDREERSEEKR) is cleaved from the precursor. The tract at residues 26 to 47 (KRETEEKENEQEDDREERSEEK) is disordered. A compositionally biased stretch (acidic residues) spans 31–40 (EKENEQEDDR). Residue Leu66 is modified to Leucine amide.

This sequence belongs to the frog skin active peptide (FSAP) family. Medusin subfamily. In terms of tissue distribution, expressed by the skin glands.

The protein localises to the secreted. Its subcellular location is the target cell membrane. In terms of biological role, antibacterial peptide with moderate activity against the Gram-positive bacteria (S.aureus ATCC 25923, MIC=25 uM), but not against all other bacteria (both Gram-positive and Gram-negative) tested. Does not show activity against fungi, and against Leishmania species. It adopts an alpha-helical structure with very low amphipathicity in membrane environments. This Phyllomedusa sauvagei (Sauvage's leaf frog) protein is Medusin-S1.